The primary structure comprises 526 residues: ATP-dependent RNA helicase DBP3 (526 aa).

The span at 1–33 (MVEEHKNKKRRQEDGPADVPEKKVKVSKSEKKD) shows a compositional bias: basic and acidic residues. Residues 1-86 (MVEEHKNKKR…SSQGYTQSES (86 aa)) form a disordered region. The segment covering 34–65 (KKEKKEKKEKKEKKEKKEKKEKKEKKEKKKKY) has biased composition (basic residues). Polar residues predominate over residues 69-86 (ATISGSAQSSQGYTQSES). The Q motif signature appears at 118-144 (LSFDQIQLNSKISAVVNKFPTPTPIQS). The 172-residue stretch at 147–318 (WPYLLSGKDV…STFMNQPVKV (172 aa)) folds into the Helicase ATP-binding domain. 160–167 (AETGSGKT) contacts ATP. The DEAD box signature appears at 265-268 (DEAD). The Helicase C-terminal domain maps to 334-496 (QIVEVIEPFD…PVPDELLKFG (163 aa)).

Belongs to the DEAD box helicase family. DDX5/DBP2 subfamily.

The protein resides in the nucleus. The protein localises to the nucleolus. It carries out the reaction ATP + H2O = ADP + phosphate + H(+). ATP-dependent RNA helicase required for 60S ribosomal subunit synthesis. Involved in efficient pre-rRNA processing, predominantly at site A3, which is necessary for the normal formation of 25S and 5.8S rRNAs. The chain is ATP-dependent RNA helicase DBP3 (DBP3) from Scheffersomyces stipitis (strain ATCC 58785 / CBS 6054 / NBRC 10063 / NRRL Y-11545) (Yeast).